Reading from the N-terminus, the 157-residue chain is Large ribosomal subunit protein uL15 (157 aa).

It belongs to the universal ribosomal protein uL15 family. As to quaternary structure, part of the 50S ribosomal subunit.

Its function is as follows. Binds to the 23S rRNA. The polypeptide is Large ribosomal subunit protein uL15 (Ehrlichia ruminantium (strain Welgevonden)).